A 169-amino-acid polypeptide reads, in one-letter code: MEHPMRKIRIEKVTLNIGVGESGEKLDKAYELLKRLTGQKPVKTKAKVRVEQWHIRPGLPIGVKVTLRGEKAYKILKEKLLPAVDFKIKASSFTDRGFGFGIPEYIMIPGMKYDPELGLIGLEAYVTLERPGYRVERRRIKRSKVGSRHRLNKEEIIKWAQEELGVQII.

It belongs to the universal ribosomal protein uL5 family. As to quaternary structure, part of the 50S ribosomal subunit; contacts the 5S rRNA and probably tRNA. Forms a bridge to the 30S subunit in the 70S ribosome.

This is one of the proteins that bind and probably mediate the attachment of the 5S RNA into the large ribosomal subunit, where it forms part of the central protuberance. In the 70S ribosome it contacts protein S13 of the 30S subunit (bridge B1b), connecting the 2 subunits; this bridge is implicated in subunit movement. May contact the P site tRNA; the 5S rRNA and some of its associated proteins might help stabilize positioning of ribosome-bound tRNAs. The chain is Large ribosomal subunit protein uL5 from Nanoarchaeum equitans (strain Kin4-M).